The primary structure comprises 409 residues: Evolutionarily conserved signaling intermediate in Toll pathway, mitochondrial (409 aa).

The N-terminal 26 residues, 1–26 (MLRRAQCLLRLHGNGGHSLVSRFRNY), are a transit peptide targeting the mitochondrion. Disordered stretches follow at residues 27-53 (ATDEGNPKQNPNPNPRAQKPGTKNLPA) and 383-409 (EEIEGGASVPATSDNSSQDEHISSRQK). Basic and acidic residues predominate over residues 400 to 409 (QDEHISSRQK).

It belongs to the ECSIT family. In terms of assembly, interacts with Traf6. Associates with mitochondrial complex I assembly intermediates during its biogenesis.

The protein resides in the cytoplasm. Its subcellular location is the nucleus. The protein localises to the mitochondrion. Its function is as follows. As part of the MCIA complex, involved in the assembly of the mitochondrial complex I. Involved in the innate immune response; promotes the production of antibacterial peptides. The sequence is that of Evolutionarily conserved signaling intermediate in Toll pathway, mitochondrial from Drosophila melanogaster (Fruit fly).